The primary structure comprises 269 residues: Phosphate import ATP-binding protein PstB 1 (269 aa).

The region spanning 25–264 (LSTEDLHVFY…PQVDLTNDYI (240 aa)) is the ABC transporter domain. 57–64 (GPSGSGKS) is a binding site for ATP.

Belongs to the ABC transporter superfamily. Phosphate importer (TC 3.A.1.7) family. The complex is composed of two ATP-binding proteins (PstB), two transmembrane proteins (PstC and PstA) and a solute-binding protein (PstS).

It is found in the cell membrane. It carries out the reaction phosphate(out) + ATP + H2O = ADP + 2 phosphate(in) + H(+). Functionally, part of the ABC transporter complex PstSACB involved in phosphate import. Responsible for energy coupling to the transport system. The sequence is that of Phosphate import ATP-binding protein PstB 1 from Lactiplantibacillus plantarum (strain ATCC BAA-793 / NCIMB 8826 / WCFS1) (Lactobacillus plantarum).